A 95-amino-acid chain; its full sequence is Large ribosomal subunit protein bL27 (95 aa).

The tract at residues 1–24 is disordered; it reads MAHKKGTGSTRNGRDSNSQRLGVK. Positions 7–20 are enriched in polar residues; sequence TGSTRNGRDSNSQR.

The protein belongs to the bacterial ribosomal protein bL27 family.

This chain is Large ribosomal subunit protein bL27, found in Trichodesmium erythraeum (strain IMS101).